Here is a 1342-residue protein sequence, read N- to C-terminus: DNA-directed RNA polymerase subunit beta (1342 aa).

The protein belongs to the RNA polymerase beta chain family. In terms of assembly, the RNAP catalytic core consists of 2 alpha, 1 beta, 1 beta' and 1 omega subunit. When a sigma factor is associated with the core the holoenzyme is formed, which can initiate transcription.

The catalysed reaction is RNA(n) + a ribonucleoside 5'-triphosphate = RNA(n+1) + diphosphate. Its function is as follows. DNA-dependent RNA polymerase catalyzes the transcription of DNA into RNA using the four ribonucleoside triphosphates as substrates. The protein is DNA-directed RNA polymerase subunit beta of Klebsiella pneumoniae (strain 342).